The chain runs to 477 residues: Glycogen synthase (477 aa).

Lysine 15 provides a ligand contact to ADP-alpha-D-glucose.

This sequence belongs to the glycosyltransferase 1 family. Bacterial/plant glycogen synthase subfamily.

It carries out the reaction [(1-&gt;4)-alpha-D-glucosyl](n) + ADP-alpha-D-glucose = [(1-&gt;4)-alpha-D-glucosyl](n+1) + ADP + H(+). The protein operates within glycan biosynthesis; glycogen biosynthesis. Functionally, synthesizes alpha-1,4-glucan chains using ADP-glucose. This chain is Glycogen synthase, found in Erwinia tasmaniensis (strain DSM 17950 / CFBP 7177 / CIP 109463 / NCPPB 4357 / Et1/99).